We begin with the raw amino-acid sequence, 506 residues long: Probable Xaa-Pro aminopeptidase PAAG_05466 (506 aa).

Mn(2+) contacts are provided by Asp285, Asp296, Glu433, and Glu471.

This sequence belongs to the peptidase M24B family. Requires Mn(2+) as cofactor.

The enzyme catalyses Release of any N-terminal amino acid, including proline, that is linked to proline, even from a dipeptide or tripeptide.. In terms of biological role, catalyzes the removal of a penultimate prolyl residue from the N-termini of peptides. The protein is Probable Xaa-Pro aminopeptidase PAAG_05466 of Paracoccidioides lutzii (strain ATCC MYA-826 / Pb01) (Paracoccidioides brasiliensis).